Reading from the N-terminus, the 122-residue chain is Large ribosomal subunit protein uL14c (122 aa).

It belongs to the universal ribosomal protein uL14 family. As to quaternary structure, part of the 50S ribosomal subunit.

The protein localises to the plastid. It localises to the chloroplast. Functionally, binds to 23S rRNA. This is Large ribosomal subunit protein uL14c from Liriodendron tulipifera (Tuliptree).